Consider the following 425-residue polypeptide: Enolase (425 aa).

Gln-163 provides a ligand contact to (2R)-2-phosphoglycerate. The active-site Proton donor is the Glu-205. Positions 242, 285, and 312 each coordinate Mg(2+). (2R)-2-phosphoglycerate is bound by residues Lys-337, Arg-366, Ser-367, and Lys-388. Catalysis depends on Lys-337, which acts as the Proton acceptor.

Belongs to the enolase family. The cofactor is Mg(2+).

Its subcellular location is the cytoplasm. It localises to the secreted. The protein localises to the cell surface. The catalysed reaction is (2R)-2-phosphoglycerate = phosphoenolpyruvate + H2O. Its pathway is carbohydrate degradation; glycolysis; pyruvate from D-glyceraldehyde 3-phosphate: step 4/5. Its function is as follows. Catalyzes the reversible conversion of 2-phosphoglycerate (2-PG) into phosphoenolpyruvate (PEP). It is essential for the degradation of carbohydrates via glycolysis. The polypeptide is Enolase (Ruegeria pomeroyi (strain ATCC 700808 / DSM 15171 / DSS-3) (Silicibacter pomeroyi)).